The sequence spans 432 residues: Enolase (432 aa).

Glutamine 167 is a binding site for (2R)-2-phosphoglycerate. Glutamate 209 (proton donor) is an active-site residue. 3 residues coordinate Mg(2+): aspartate 246, glutamate 291, and aspartate 318. (2R)-2-phosphoglycerate is bound by residues lysine 343, arginine 372, serine 373, and lysine 394. Catalysis depends on lysine 343, which acts as the Proton acceptor.

This sequence belongs to the enolase family. In terms of assembly, component of the RNA degradosome, a multiprotein complex involved in RNA processing and mRNA degradation. Mg(2+) serves as cofactor.

Its subcellular location is the cytoplasm. It localises to the secreted. The protein localises to the cell surface. It carries out the reaction (2R)-2-phosphoglycerate = phosphoenolpyruvate + H2O. Its pathway is carbohydrate degradation; glycolysis; pyruvate from D-glyceraldehyde 3-phosphate: step 4/5. In terms of biological role, catalyzes the reversible conversion of 2-phosphoglycerate (2-PG) into phosphoenolpyruvate (PEP). It is essential for the degradation of carbohydrates via glycolysis. The sequence is that of Enolase from Buchnera aphidicola subsp. Cinara cedri (strain Cc).